Here is a 118-residue protein sequence, read N- to C-terminus: Large ribosomal subunit protein bL20 (118 aa).

This sequence belongs to the bacterial ribosomal protein bL20 family.

In terms of biological role, binds directly to 23S ribosomal RNA and is necessary for the in vitro assembly process of the 50S ribosomal subunit. It is not involved in the protein synthesizing functions of that subunit. This is Large ribosomal subunit protein bL20 from Desulfotalea psychrophila (strain LSv54 / DSM 12343).